A 289-amino-acid chain; its full sequence is Diaminopimelate epimerase (289 aa).

2 residues coordinate substrate: N11 and N78. Catalysis depends on C87, which acts as the Proton donor. Substrate-binding positions include G88–N89, N163, N199, and E217–R218. Catalysis depends on C226, which acts as the Proton acceptor. G227–T228 is a binding site for substrate.

This sequence belongs to the diaminopimelate epimerase family. As to quaternary structure, homodimer.

The protein localises to the cytoplasm. The enzyme catalyses (2S,6S)-2,6-diaminopimelate = meso-2,6-diaminopimelate. It functions in the pathway amino-acid biosynthesis; L-lysine biosynthesis via DAP pathway; DL-2,6-diaminopimelate from LL-2,6-diaminopimelate: step 1/1. Functionally, catalyzes the stereoinversion of LL-2,6-diaminopimelate (L,L-DAP) to meso-diaminopimelate (meso-DAP), a precursor of L-lysine and an essential component of the bacterial peptidoglycan. The sequence is that of Diaminopimelate epimerase from Mycolicibacterium vanbaalenii (strain DSM 7251 / JCM 13017 / BCRC 16820 / KCTC 9966 / NRRL B-24157 / PYR-1) (Mycobacterium vanbaalenii).